The primary structure comprises 297 residues: ATP synthase gamma chain (297 aa).

The protein belongs to the ATPase gamma chain family. As to quaternary structure, F-type ATPases have 2 components, CF(1) - the catalytic core - and CF(0) - the membrane proton channel. CF(1) has five subunits: alpha(3), beta(3), gamma(1), delta(1), epsilon(1). CF(0) has three main subunits: a, b and c.

The protein localises to the cell membrane. Its function is as follows. Produces ATP from ADP in the presence of a proton gradient across the membrane. The gamma chain is believed to be important in regulating ATPase activity and the flow of protons through the CF(0) complex. This chain is ATP synthase gamma chain, found in Beutenbergia cavernae (strain ATCC BAA-8 / DSM 12333 / CCUG 43141 / JCM 11478 / NBRC 16432 / NCIMB 13614 / HKI 0122).